Here is a 920-residue protein sequence, read N- to C-terminus: Ubiquitin ligase-binding protein BUL2 (920 aa).

Over residues 1–10 (MTFTFSTSSR) the composition is skewed to polar residues. The interval 1–89 (MTFTFSTSSR…EENSLEMDCT (89 aa)) is disordered. Thr22 is subject to Phosphothreonine. Residues 35–57 (QQLSSNSTDNSLHPNSGQTPRAS) show a composition bias toward polar residues. A compositionally biased stretch (basic and acidic residues) spans 73 to 82 (DRLRQEREEN). Residues 129–133 (FPPSY) carry the PY-motif motif. Ser557 carries the phosphoserine modification.

It belongs to the BUL1 family. Component of the RSP5-BUL1/2 ubiquitin ligase complex composed of at least RSP5 and BUL1 or BUL2.

It is found in the cytoplasm. Its pathway is protein modification; protein ubiquitination. Functionally, component of a RSP5 ubiquitin ligase complex which specifies polyubiquitination and intracellular trafficking of the general amino acid permease GAP1 as well as other permeases such as PMA1. The RSP5-BUL1/2 complex is also necessary for the heat-shock element (HSE)-mediated gene expression, nitrogen starvation GLN3-dependent transcription and pressure-induced differential regulation of the 2 tryptophan permeases TAT1 and TAT2. This chain is Ubiquitin ligase-binding protein BUL2 (BUL2), found in Saccharomyces cerevisiae (strain ATCC 204508 / S288c) (Baker's yeast).